The sequence spans 1335 residues: MAKKFNYKLPSMVALTLFGTAFTAHQANAAEQPQNQSNHKNVLDDQTALKQAEKAKSEVTQSTTNVSGTQTYQDPTQVQPKQDTQSTTYDASLDEMSTYNEISSNQKQQSLSTDDANQNQTNSVTKNQQEETNDLTQEDKTSTDTNQLQETQSVAKENEKDLGANANNEQQDKKMTASQPSENQAIETQTASNDNESQQKSQQVTSEQNETATPKVSNTNASGYNFDYDDEDDDSSTDHLEPISLNNVNATSKQTTSYKYKEPAQRVTTNTVKKETASNQATIDTKQFTPFSATAQPRTVYSVSSQKTSSLPKYTPKVNSSINNYIRKKNMKAPRIEEDYTSYFPKYGYRNGVGRPEGIVVHDTANDNSTIDGEIAFMKRNYTNAFVHAFVDGNRIIETAPTDYLSWGAGPYGNQRFINVEIVHTHDYDSFARSMNNYADYAATQLQYYNLKPDSAENDGRGTVWTHAAISNFLGGTDHADPHQYLRSHNYSYAELYDLIYEKYLIKTKQVAPWGTTSTKPSQPSKPSGGTNNKLTVSANRGVAQIKPTNNGLYTTVYDSKGHKTDQVQKTLSVTKTATLGNNKFYLVEDYNSGKKYGWVKQGDVVYNTAKAPVKVNQTYNVKAGSTLYTVPWGTPKQVASKVSGTGNQTFKATKQQQIDKATYLYGTVNGKSGWISKYYLTTASKPSNPTKPSTNNQLTVTNNSGVAQINAKNSGLYTTVYDTKGKTTNQIQRTLSVTKAATLGDKKFYLVGDYNTGTNYGWVKQDEVIYNTAKSPVKINQTYNVKPGVKLHTVPWGTYNQVAGTVSGKGDQTFKATKQQQIDKATYLYGTVNGKSGWISKYYLTAPSKVQALSTQSTPAPKQVKPSTQTVNQIAQVKANNSGIRASVYDKTAKSGTKYANRTFLINKQRTQGNNTYVLLQDGTSNTPLGWVNINDVTTQNIGKQTQSIGKYSVKPTNNGLYSIAWGTKNQQLLAPNTLANQAFNASKAVYVGKDLYLYGTVNNRTGWIAAKDLIQNSTDAQSTPYNYTFVINNSKSYFYMDPTKANRYSLKPYYEQTFTVIKQKNINGVKWYYGQLLDGKYVWIKSTDLVKEKIKYAYTGMTLNNAINIQSRLKYKPQVQNEPLKWSNANYSQIKNAMDTKRLANDSSLKYQFLRLDQPQYLSAQALNKLLKGKGVLENQGAAFSQAARKYGLNEIYLISHALVETGNGTSQLAKGGDVSKGKFTTKTGHKYHNVFGIGAFDNNALVDGIKYAKNAGWTSVSKAIIGGAKFIGNSYVKAGQNTLYKMRWNPANPGTHQYATDINWANVNAQVLKQFYDKIGEVGKYFEIPIYK.

The N-terminal stretch at Met1 to Ala29 is a signal peptide. Disordered regions lie at residues Gln51–Thr88, Asn100–Glu262, and Trp514–Leu535. Polar residues-rich tracts occupy residues Glu58–Thr88, Asn100–Asn127, Thr143–Ala155, Thr176–Gly223, and Ser244–Tyr258. The segment at Val303 to Lys863 is N-acetylmuramoyl-L-alanine amidase. Positions Gly515–Thr531 are enriched in low complexity. 7 consecutive GW domains span residues Asn533 to Ala610, Ala612 to Lys686, Thr700 to Ala774, Ser776 to Lys850, Ser868 to Ile943, Lys945 to Thr1020, and Gln1023 to Ile1096. Residues Gln864–Lys1335 are endo-beta-N-acetylglucosaminidase.

This sequence in the N-terminal section; belongs to the N-acetylmuramoyl-L-alanine amidase 2 family. It in the C-terminal section; belongs to the glycosyl hydrolase 73 family. In terms of assembly, oligomer; forms a ring structure at the cell surface which is important for efficient partitioning of daughter cells after cell division. Post-translationally, undergoes proteolytic processing to generate the two extracellular lytic enzymes, probably at the septal region on the cell surface.

It localises to the secreted. The catalysed reaction is Hydrolyzes the link between N-acetylmuramoyl residues and L-amino acid residues in certain cell-wall glycopeptides.. It catalyses the reaction an N(4)-(oligosaccharide-(1-&gt;3)-[oligosaccharide-(1-&gt;6)]-beta-D-Man-(1-&gt;4)-beta-D-GlcNAc-(1-&gt;4)-alpha-D-GlcNAc)-L-asparaginyl-[protein] + H2O = an oligosaccharide-(1-&gt;3)-[oligosaccharide-(1-&gt;6)]-beta-D-Man-(1-&gt;4)-D-GlcNAc + N(4)-(N-acetyl-beta-D-glucosaminyl)-L-asparaginyl-[protein]. Endohydrolysis of the di-N-acetylchitobiosyl unit in high-mannose glycopeptides and glycoproteins containing the -[(Man)5(GlcNAc)2]-Asn structure. One N-acetyl-D-glucosamine residue remains attached to the protein; the rest of the oligosaccharide is released intact. Cleaves the peptidoglycan connecting the daughter cells at the end of the cell division cycle, resulting in the separation of the two newly divided cells. Acts as an autolysin in penicillin-induced lysis. The protein is Bifunctional autolysin (atl) of Staphylococcus epidermidis (strain ATCC 12228 / FDA PCI 1200).